The following is a 565-amino-acid chain: NAD-dependent malic enzyme (565 aa).

The active-site Proton donor is Tyr104. Arg157 serves as a coordination point for NAD(+). Lys175 (proton acceptor) is an active-site residue. 3 residues coordinate a divalent metal cation: Glu246, Asp247, and Asp270. Residues Asp270 and Asn418 each coordinate NAD(+).

Belongs to the malic enzymes family. As to quaternary structure, homotetramer. Mg(2+) is required as a cofactor. The cofactor is Mn(2+).

The enzyme catalyses (S)-malate + NAD(+) = pyruvate + CO2 + NADH. It carries out the reaction oxaloacetate + H(+) = pyruvate + CO2. The sequence is that of NAD-dependent malic enzyme from Salmonella heidelberg (strain SL476).